The primary structure comprises 355 residues: CX3C chemokine receptor 1 (355 aa).

Topologically, residues 1-31 are extracellular; it reads MDQFPESVTENFEYDDLAEACYIGDIVVFGT. The helical transmembrane segment at 32 to 59 threads the bilayer; it reads VFLSIFYSVIFAIGLVGNLLVVFALTNS. At 60–69 the chain is on the cytoplasmic side; sequence KKPKSVTDIY. A helical membrane pass occupies residues 70–90; the sequence is LLNLALSDLLFVATLPFWTHY. Over 91–103 the chain is Extracellular; that stretch reads LINEKGLHNAMCK. Cysteine 102 and cysteine 175 are oxidised to a cystine. The chain crosses the membrane as a helical span at residues 104-125; the sequence is FTTAFFFIGFFGSIFFITVISI. Over 126 to 142 the chain is Cytoplasmic; sequence DRYLAIVLAANSMNNRT. The helical transmembrane segment at 143–167 threads the bilayer; sequence VQHGVTISLGVWAAAILVAAPQFMF. Over 168 to 195 the chain is Extracellular; the sequence is TKQKENECLGDYPEVLQEIWPVLRNVET. A helical transmembrane segment spans residues 196 to 215; the sequence is NFLGFLLPLLIMSYCYFRII. The Cytoplasmic segment spans residues 216–231; the sequence is QTLFSCKNHKKAKAIK. The helical transmembrane segment at 232–256 threads the bilayer; sequence LILLVVIVFFLFWTPYNVMIFLETL. The Extracellular segment spans residues 257-273; that stretch reads KLYDFFPSCDMRKDLRL. A helical transmembrane segment spans residues 274 to 297; that stretch reads ALSVTETVAFSHCCLNPLIYAFAG. The Cytoplasmic segment spans residues 298–355; sequence EKFRRYLYHLYGKCLAVLCGRSVHVDFSSSESQRSRHGSVLSSNFTYHTSDGDALLLL. Threonine 346 is modified (phosphothreonine).

The protein belongs to the G-protein coupled receptor 1 family. In terms of assembly, found in a ternary complex with CX3CL1 and ITGAV:ITGB3 or ITGA4:ITGB1. (Microbial infection) Interacts with human respiratory syncytial virus (HRSV) protein G; this interaction modulates host immune response. As to quaternary structure, (Microbial infection) Interacts with HIV-1 envelope polyprotein gp160. In terms of processing, this protein is not N-glycosylated which is unusual for G-protein-coupled receptors. In terms of tissue distribution, expressed in lymphoid and neural tissues. Expressed in lymphocyte subsets, such as natural killer (NK) cells, gamma-delta T-cells and terminally differentiated CD8(+) T-cells. Expressed in smooth muscle cells in atherosclerotic plaques.

It is found in the cell membrane. Functionally, receptor for the C-X3-C chemokine fractalkine (CX3CL1) present on many early leukocyte cells; CX3CR1-CX3CL1 signaling exerts distinct functions in different tissue compartments, such as immune response, inflammation, cell adhesion and chemotaxis. CX3CR1-CX3CL1 signaling mediates cell migratory functions. Responsible for the recruitment of natural killer (NK) cells to inflamed tissues. Acts as a regulator of inflammation process leading to atherogenesis by mediating macrophage and monocyte recruitment to inflamed atherosclerotic plaques, promoting cell survival. Involved in airway inflammation by promoting interleukin 2-producing T helper (Th2) cell survival in inflamed lung. Involved in the migration of circulating monocytes to non-inflamed tissues, where they differentiate into macrophages and dendritic cells. Acts as a negative regulator of angiogenesis, probably by promoting macrophage chemotaxis. Plays a key role in brain microglia by regulating inflammatory response in the central nervous system (CNS) and regulating synapse maturation. Required to restrain the microglial inflammatory response in the CNS and the resulting parenchymal damage in response to pathological stimuli. Involved in brain development by participating in synaptic pruning, a natural process during which brain microglia eliminates extra synapses during postnatal development. Synaptic pruning by microglia is required to promote the maturation of circuit connectivity during brain development. Acts as an important regulator of the gut microbiota by controlling immunity to intestinal bacteria and fungi. Expressed in lamina propria dendritic cells in the small intestine, which form transepithelial dendrites capable of taking up bacteria in order to provide defense against pathogenic bacteria. Required to initiate innate and adaptive immune responses against dissemination of commensal fungi (mycobiota) component of the gut: expressed in mononuclear phagocytes (MNPs) and acts by promoting induction of antifungal IgG antibodies response to confer protection against disseminated C.albicans or C.auris infection. Also acts as a receptor for C-C motif chemokine CCL26, inducing cell chemotaxis. In terms of biological role, (Microbial infection) Acts as a coreceptor with CD4 for HIV-1 virus envelope protein. (Microbial infection) Acts as a coreceptor with CD4 for HIV-1 virus envelope protein. May have more potent HIV-1 coreceptothr activity than isoform 1. Its function is as follows. (Microbial infection) Acts as a coreceptor with CD4 for HIV-1 virus envelope protein. May have more potent HIV-1 coreceptor activity than isoform 1. The chain is CX3C chemokine receptor 1 from Homo sapiens (Human).